Reading from the N-terminus, the 419-residue chain is Pyrophosphate--fructose 6-phosphate 1-phosphotransferase (419 aa).

Diphosphate is bound at residue Gly-13. Residues Thr-142–Asp-144, Met-190–Arg-192, Glu-247, and Tyr-297–Arg-300 contribute to the substrate site. Asp-144 serves as the catalytic Proton acceptor.

It belongs to the phosphofructokinase type A (PFKA) family. PPi-dependent PFK group II subfamily. Clade 'B2' sub-subfamily. In terms of assembly, homodimer. Requires Mg(2+) as cofactor.

The protein resides in the cytoplasm. It catalyses the reaction beta-D-fructose 6-phosphate + diphosphate = beta-D-fructose 1,6-bisphosphate + phosphate + H(+). Its pathway is carbohydrate degradation; glycolysis; D-glyceraldehyde 3-phosphate and glycerone phosphate from D-glucose: step 3/4. Non-allosteric. In terms of biological role, catalyzes the phosphorylation of D-fructose 6-phosphate, the first committing step of glycolysis. Uses inorganic phosphate (PPi) as phosphoryl donor instead of ATP like common ATP-dependent phosphofructokinases (ATP-PFKs), which renders the reaction reversible, and can thus function both in glycolysis and gluconeogenesis. Consistently, PPi-PFK can replace the enzymes of both the forward (ATP-PFK) and reverse (fructose-bisphosphatase (FBPase)) reactions. This chain is Pyrophosphate--fructose 6-phosphate 1-phosphotransferase, found in Halomonas elongata (strain ATCC 33173 / DSM 2581 / NBRC 15536 / NCIMB 2198 / 1H9).